The sequence spans 334 residues: WD repeat-containing protein 54 (334 aa).

3 WD repeats span residues 162–206 (GHQM…TLLT), 208–247 (IPGF…LHVQ), and 250–289 (AHAR…ESGY).

As to quaternary structure, homodimer and homotrimer; forms tight forms of dimers and trimers. Interacts with IZUMO1 and IZUMO1R/JUNO. In terms of processing, cross-linked to tightly form both dimers and trimers by TGM2. Cross-linking enhances the activation of EGF receptor-mediated signaling pathway. Cross-linking is inhibited by EGF. Post-translationally, ubiquitinated. EGF increases ubiquitination. In terms of tissue distribution, expressed in epithelial cells (at protein level). Isoform 3 expression is highly increased in colorectal cancer cells.

It is found in the vesicle. It localises to the cytoplasm. The protein resides in the cell membrane. Its function is as follows. Plays a role in the adhesion and fusion of the sperm-oocyte membrane through its interactions with IZUMO1 and IZUMO1R/JUNO. When cross-linked to form dimers and trimers, it has a regulatory effect on ERK signaling pathway activity in response to EGF stimulation. Colocalizes with the EGF receptor in WDR54-specific vesicle where it sustains the internalization and controls the degradation of the EGF receptor after EGF stimulation. In Homo sapiens (Human), this protein is WD repeat-containing protein 54.